Consider the following 313-residue polypeptide: tRNA (guanine-N(7)-)-methyltransferase (313 aa).

Positions 33, 58, and 85 each coordinate S-adenosyl-L-methionine. Substrate is bound by residues K112, D144, and 177–180 (TRYE).

This sequence belongs to the class I-like SAM-binding methyltransferase superfamily. TrmB family.

The catalysed reaction is guanosine(46) in tRNA + S-adenosyl-L-methionine = N(7)-methylguanosine(46) in tRNA + S-adenosyl-L-homocysteine. Its pathway is tRNA modification; N(7)-methylguanine-tRNA biosynthesis. In terms of biological role, catalyzes the formation of N(7)-methylguanine at position 46 (m7G46) in tRNA. The chain is tRNA (guanine-N(7)-)-methyltransferase from Thermotoga maritima (strain ATCC 43589 / DSM 3109 / JCM 10099 / NBRC 100826 / MSB8).